A 575-amino-acid polypeptide reads, in one-letter code: Delta-selinene-like synthase, chloroplastic (575 aa).

(2E,6E)-farnesyl diphosphate contacts are provided by R288, D325, D329, R466, and D469. 2 residues coordinate Mg(2+): D325 and D329. Residues 325–329 (DDLYD) carry the DDXXD motif motif. Mg(2+) is bound by residues D469 and E477.

Belongs to the terpene synthase family. Tpsb subfamily. In terms of assembly, monomer. Requires Mg(2+) as cofactor. The cofactor is Mn(2+).

It is found in the plastid. The protein localises to the chloroplast. It catalyses the reaction (2E,6E)-farnesyl diphosphate = (+)-delta-selinene + diphosphate. It participates in secondary metabolite biosynthesis; terpenoid biosynthesis. The protein operates within terpene metabolism; oleoresin biosynthesis. In terms of biological role, sesquiterpene synthase (sesqui-TPS) involved in the biosynthesis of sesquiterpene natural products. Catalyzes the conversion of (2E)-geranyl diphosphate (GPP) into delta-selinene. This Picea sitchensis (Sitka spruce) protein is Delta-selinene-like synthase, chloroplastic.